The following is a 444-amino-acid chain: Protein EMP46 (444 aa).

The first 46 residues, methionine 1 to glycine 46, serve as a signal peptide directing secretion. At lysine 47 to glutamate 408 the chain is on the lumenal side. An L-type lectin-like domain is found at aspartate 52–glycine 269. K(+) is bound at residue tyrosine 177. Cysteines 196 and 230 form a disulfide. The chain crosses the membrane as a helical span at residues isoleucine 409–tyrosine 429. The interval tyrosine 429–phenylalanine 432 is mediates the interactions with COPI and COPII coat complexes. Topologically, residues tyrosine 430 to leucine 444 are cytoplasmic. The Di-lysine motif signature appears at lysine 440 to leucine 444.

It belongs to the EMP46/EMP47 family. As to quaternary structure, interacts with EMP47 in the endoplasmic reticulum membrane in order to be transported to the Golgi apparatus. Interacts with the coatomer proteins COP1, SEC21 and SEC23.

It is found in the golgi apparatus membrane. The protein localises to the endoplasmic reticulum membrane. In terms of biological role, involved in the secretion of glycoproteins and in nucleus architecture and gene silencing. This Saccharomyces cerevisiae (strain ATCC 204508 / S288c) (Baker's yeast) protein is Protein EMP46 (EMP46).